The following is a 360-amino-acid chain: Photosystem II protein D1 (360 aa).

3 helical membrane passes run 29-46 (YIGW…TATT), 118-133 (HFLL…QWEL), and 142-156 (WICV…AATA). A chlorophyll a-binding site is contributed by H118. A pheophytin a-binding site is contributed by Y126. Residues D170 and E189 each contribute to the [CaMn4O5] cluster site. The chain crosses the membrane as a helical span at residues 197–218 (FHMLGVAGVFGGSLFSAMHGSL). H198 is a chlorophyll a binding site. A quinone-binding positions include H215 and 264-265 (SF). H215 is a binding site for Fe cation. Fe cation is bound at residue H272. Residues 274–288 (FLGAWPVIGIWFTAM) form a helical membrane-spanning segment. Residues H332, E333, D342, and A344 each coordinate [CaMn4O5] cluster. A propeptide spanning residues 345–360 (SGEQAPVALIAPAING) is cleaved from the precursor.

Belongs to the reaction center PufL/M/PsbA/D family. PSII is composed of 1 copy each of membrane proteins PsbA, PsbB, PsbC, PsbD, PsbE, PsbF, PsbH, PsbI, PsbJ, PsbK, PsbL, PsbM, PsbT, PsbX, PsbY, PsbZ, Psb30/Ycf12, peripheral proteins PsbO, CyanoQ (PsbQ), PsbU, PsbV and a large number of cofactors. It forms dimeric complexes. Requires The D1/D2 heterodimer binds P680, chlorophylls that are the primary electron donor of PSII, and subsequent electron acceptors. It shares a non-heme iron and each subunit binds pheophytin, quinone, additional chlorophylls, carotenoids and lipids. D1 provides most of the ligands for the Mn4-Ca-O5 cluster of the oxygen-evolving complex (OEC). There is also a Cl(-1) ion associated with D1 and D2, which is required for oxygen evolution. The PSII complex binds additional chlorophylls, carotenoids and specific lipids. as cofactor. Post-translationally, tyr-161 forms a radical intermediate that is referred to as redox-active TyrZ, YZ or Y-Z. C-terminally processed by CtpA; processing is essential to allow assembly of the oxygen-evolving complex and thus photosynthetic growth.

It localises to the cellular thylakoid membrane. The enzyme catalyses 2 a plastoquinone + 4 hnu + 2 H2O = 2 a plastoquinol + O2. Functionally, photosystem II (PSII) is a light-driven water:plastoquinone oxidoreductase that uses light energy to abstract electrons from H(2)O, generating O(2) and a proton gradient subsequently used for ATP formation. It consists of a core antenna complex that captures photons, and an electron transfer chain that converts photonic excitation into a charge separation. The D1/D2 (PsbA/PsbD) reaction center heterodimer binds P680, the primary electron donor of PSII as well as several subsequent electron acceptors. The chain is Photosystem II protein D1 from Microcystis aeruginosa (strain NIES-843 / IAM M-2473).